We begin with the raw amino-acid sequence, 188 residues long: Elongation factor P (188 aa).

Belongs to the elongation factor P family.

It localises to the cytoplasm. The protein operates within protein biosynthesis; polypeptide chain elongation. Functionally, involved in peptide bond synthesis. Stimulates efficient translation and peptide-bond synthesis on native or reconstituted 70S ribosomes in vitro. Probably functions indirectly by altering the affinity of the ribosome for aminoacyl-tRNA, thus increasing their reactivity as acceptors for peptidyl transferase. This chain is Elongation factor P, found in Ureaplasma urealyticum serovar 10 (strain ATCC 33699 / Western).